Reading from the N-terminus, the 350-residue chain is Protein SGT1 homolog A (350 aa).

3 TPR repeats span residues 2–35 (AKEL…DPNC), 37–69 (EFFA…DPSL), and 71–103 (KAYL…TPSE). Residues 149–238 (TAKYRHEYYQ…ADIITWASLE (90 aa)) enclose the CS domain. Residues 260–350 (AYPSSKKVKD…DGMELKKWEI (91 aa)) form the SGS domain.

This sequence belongs to the SGT1 family. As to quaternary structure, interacts with RAR1. Forms a ternary complex with RAR1 and barley HSP90.

In terms of biological role, functions in R gene-mediated resistance, but participates in a lower extent than SGT1B to RPP5-mediated resistance. Not required for RPM1, RPS2, RPS4 and RPS5-mediated resistance. Probably required for SCF-mediated ubiquitination, by coupling HSP90 to SCF complex for ubiquitination of HSP90 client proteins. The sequence is that of Protein SGT1 homolog A (SGT1A) from Arabidopsis thaliana (Mouse-ear cress).